The primary structure comprises 461 residues: Ornithine decarboxylase (461 aa).

Position 69 is an N6-(pyridoxal phosphate)lysine (Lys-69). Residues Ser-200, Gly-237, and 274–277 (EPGR) contribute to the pyridoxal 5'-phosphate site. Ser-303 bears the Phosphoserine; by CK2 mark. 331-332 (YD) lines the substrate pocket. Residue Cys-360 is the Proton donor; shared with dimeric partner of the active site. Cys-360 is subject to S-nitrosocysteine. Asp-361 is a substrate binding site. Pyridoxal 5'-phosphate is bound at residue Tyr-389.

This sequence belongs to the Orn/Lys/Arg decarboxylase class-II family. In terms of assembly, homodimer. Only the dimer is catalytically active, as the active sites are constructed of residues from both monomers. Pyridoxal 5'-phosphate serves as cofactor.

It catalyses the reaction L-ornithine + H(+) = putrescine + CO2. The protein operates within amine and polyamine biosynthesis; putrescine biosynthesis via L-ornithine pathway; putrescine from L-ornithine: step 1/1. Its activity is regulated as follows. Inhibited by antizymes (AZs) OAZ1, OAZ2 and OAZ3 in response to polyamine levels. AZs inhibit the assembly of the functional homodimer by binding to ODC monomers. Additionally, OAZ1 targets ODC monomers for ubiquitin-independent proteolytic destruction by the 26S proteasome. Functionally, catalyzes the first and rate-limiting step of polyamine biosynthesis that converts ornithine into putrescine, which is the precursor for the polyamines, spermidine and spermine. Polyamines are essential for cell proliferation and are implicated in cellular processes, ranging from DNA replication to apoptosis. In Rattus norvegicus (Rat), this protein is Ornithine decarboxylase (Odc1).